We begin with the raw amino-acid sequence, 437 residues long: Putative permease IIC component (437 aa).

Positions 2–437 constitute a PTS EIIC type-2 domain; that stretch reads FDYILSLGGT…LFLRKRELSE (436 aa). 12 consecutive transmembrane segments (helical) span residues 5–25, 35–55, 88–108, 134–154, 173–193, 215–235, 236–256, 302–322, 325–345, 354–374, 385–405, and 410–430; these read ILSLGGTVFVPIIMIVIGLIF, AGVTVGIGFVGMGLVIVMAID, ATAIGAMIIPVIFLLNVAMLV, LMTGSLIYGVLGAICHAALSL, ISIPQGYGSSSVPLFVLLDAI, GMVGDPVIIGVVLGLIFGLAA, GEGFKGCASLMITVAAIMVLF, TIAVGLLLIPIMLILASILPG, VLPLADLPVAPFFICMATVIH, ISGVIVMITVLLIATQFAPYF, FAGESAQISALSVGNMFGWSI, and SLGIIGVVVAVGIVASVVLFL.

The protein resides in the cell inner membrane. The phosphoenolpyruvate-dependent sugar phosphotransferase system (PTS), a major carbohydrate active -transport system, catalyzes the phosphorylation of incoming sugar substrates concomitant with their translocation across the cell membrane. This is Putative permease IIC component (sgcC) from Escherichia coli (strain K12).